The sequence spans 403 residues: Flavohemoprotein (403 aa).

The Globin domain maps to 1–138; sequence MLTQKTKDIV…LADVLMGMES (138 aa). Residue H85 coordinates heme b. Residues Y95 and E137 each act as charge relay system in the active site. The reductase stretch occupies residues 149–403; the sequence is GGWKGWRTFV…EVFGPDLFAE (255 aa). An FAD-binding FR-type domain is found at 152 to 262; sequence KGWRTFVIRE…AAPYGSFHID (111 aa). Residues Y190 and 206-209 contribute to the FAD site; that span reads RQYS. 275-280 is a binding site for NADP(+); sequence GVGLTP. 395-398 is a binding site for FAD; sequence VFGP.

Belongs to the globin family. Two-domain flavohemoproteins subfamily. The protein in the C-terminal section; belongs to the flavoprotein pyridine nucleotide cytochrome reductase family. In terms of assembly, monomer. FAD serves as cofactor. The cofactor is heme b.

The protein localises to the cytoplasm. The enzyme catalyses 2 nitric oxide + NADPH + 2 O2 = 2 nitrate + NADP(+) + H(+). It carries out the reaction 2 nitric oxide + NADH + 2 O2 = 2 nitrate + NAD(+) + H(+). Functionally, is involved in NO detoxification in an aerobic process, termed nitric oxide dioxygenase (NOD) reaction that utilizes O(2) and NAD(P)H to convert NO to nitrate, which protects the bacterium from various noxious nitrogen compounds. Therefore, plays a central role in the inducible response to nitrosative stress. In the presence of oxygen and NADH, FHP has NADH oxidase activity, which leads to the generation of superoxide and H(2)O(2), both in vitro and in vivo, and it has been suggested that FHP might act as an amplifier of superoxide stress. Under anaerobic conditions, FHP also exhibits nitric oxide reductase and FAD reductase activities. However, all these reactions are much lower than NOD activity. The sequence is that of Flavohemoprotein (hmp) from Cupriavidus necator (strain ATCC 17699 / DSM 428 / KCTC 22496 / NCIMB 10442 / H16 / Stanier 337) (Ralstonia eutropha).